Here is a 144-residue protein sequence, read N- to C-terminus: MAVYLLAVAILFCIQGWPSGTVQGQAMSFMEVYERSVCQTREMLVSILDEYPSEVAHLFRPSCVTVLRCGGCCTDESLTCTATGKRSVGREIMRVDPRKGTSKIEVMQFTEHTECECRPRSTVNNGKRKKNPKEGEPRAKFPLV.

Positions 1-24 (MAVYLLAVAILFCIQGWPSGTVQG) are cleaved as a signal peptide. The residue at position 25 (glutamine 25) is a Pyrrolidone carboxylic acid. Intrachain disulfides connect cysteine 38-cysteine 80, cysteine 69-cysteine 115, and cysteine 73-cysteine 117. The tract at residues 119-144 (PRSTVNNGKRKKNPKEGEPRAKFPLV) is disordered. The segment covering 132–144 (PKEGEPRAKFPLV) has biased composition (basic and acidic residues).

This sequence belongs to the PDGF/VEGF growth factor family. Snake venom VEGF subfamily. As to quaternary structure, homodimer; disulfide-linked. Interacts with VEGF receptor-1 (FLT1) with a high affinity, whereas it binds to VEGF receptor-2 (KDR) with a low affinity. Does not bind VEGF receptor-3 (FLT4). As to expression, expressed by the venom gland.

The protein resides in the secreted. Snake venom VEGFs that may contribute to venom dispersion and prey subjugation by inducing vascular permeability and hypotension. This protein induces an increase in capillary permeability after intradermal injection, as well as a drastic hypotensive effect after intravenous injection. The hypotension is mediated by nitric oxide (NO), which is produced by VEGF-activated endothelium NO synthase. Also induces angiogenesis in vitro. Like other crotalid VEGFs, this protein interacts with VEGF receptor-1 (FLT1) with a high affinity, whereas it binds to VEGF receptor-2 (KDR) with a low affinity. The polypeptide is Snake venom vascular endothelial growth factor toxin cratrin (Crotalus atrox (Western diamondback rattlesnake)).